Reading from the N-terminus, the 284-residue chain is Tropomyosin alpha-1 chain (284 aa).

The interval 1-38 is disordered; the sequence is MDAIKKKMQMLKLDKENALDRAEQAEADKKAAEERSKQ. The stretch at 1-284 forms a coiled coil; it reads MDAIKKKMQM…DHALNDMTSI (284 aa). Positions 12 to 38 are enriched in basic and acidic residues; that stretch reads KLDKENALDRAEQAEADKKAAEERSKQ.

Belongs to the tropomyosin family. As to quaternary structure, homodimer. Heterodimer of an alpha (TPM1, TPM3 or TPM4) and a beta (TPM2) chain. Interacts with HRG (via the HRR domain); the interaction contributes to the antiangiogenic properties of the histidine/proline-rich region (HRR) of HRG.

It localises to the cytoplasm. The protein resides in the cytoskeleton. Binds to actin filaments in muscle and non-muscle cells. Plays a central role, in association with the troponin complex, in the calcium dependent regulation of vertebrate striated muscle contraction. Smooth muscle contraction is regulated by interaction with caldesmon. In non-muscle cells is implicated in stabilizing cytoskeleton actin filaments. This chain is Tropomyosin alpha-1 chain (TPM1), found in Coturnix japonica (Japanese quail).